Consider the following 375-residue polypeptide: D-aspartate oxidase (375 aa).

The N-terminal stretch at M1 to A17 is a signal peptide. Residues S9, L12, D34, S51, and G55 each contribute to the FAD site. Residue N203 is glycosylated (N-linked (GlcNAc...) asparagine). Residues R322, G354, and Y355 each contribute to the FAD site.

It belongs to the DAMOX/DASOX family. The cofactor is FAD.

The catalysed reaction is D-aspartate + O2 + H2O = oxaloacetate + H2O2 + NH4(+). It catalyses the reaction D-glutamate + O2 + H2O = H2O2 + 2-oxoglutarate + NH4(+). In terms of biological role, selectively catalyzes the oxidative deamination of acidic amino acids. Protects the organism from the toxicity of D-amino acids. Enables the organism to utilize D-amino acids as a source of nutrients. Enables the organism to utilize D-aspartate as a nitrogen source. This Komagataella phaffii (strain GS115 / ATCC 20864) (Yeast) protein is D-aspartate oxidase (DDO).